The primary structure comprises 524 residues: Lycopene epsilon cyclase, chloroplastic (524 aa).

The transit peptide at 1–45 (MECVGARNFAAMAVSTFPSWSCRRKFPVVKRYSYRNIRFGLCSVR) directs the protein to the chloroplast. Residue 111–139 (LVVIGCGPAGLALAAESAKLGLKVGLIGP) coordinates NAD(+). 2 helical membrane-spanning segments follow: residues 441–461 (FFLFGLALIVQFDTEGIRSFF) and 475–495 (FLGSTLTSGDLVLFALYMFVI).

The protein belongs to the lycopene cyclase family.

The protein localises to the plastid. Its subcellular location is the chloroplast membrane. The enzyme catalyses a carotenoid psi-end group = a carotenoid epsilon-end group. The protein operates within carotenoid biosynthesis; alpha-zeacarotene biosynthesis. Its pathway is carotenoid biosynthesis; delta-carotene biosynthesis. In terms of biological role, involved in carotenoid biosynthesis. Catalyzes the single epsilon-cyclization reaction which converts lycopene to delta-carotene and neurosporene to alpha-zeacarotene. Required for lutein biosynthesis. The sequence is that of Lycopene epsilon cyclase, chloroplastic from Arabidopsis thaliana (Mouse-ear cress).